The sequence spans 359 residues: UPF0496 protein At3g57100 (359 aa).

Residues 179–208 adopt a coiled-coil conformation; sequence HEELAKMVVKLEKTMKDIDKKLRRVRGRRA. A helical membrane pass occupies residues 214-234; it reads LLAPVIAVIFLSKLVAGLVPI.

The protein belongs to the UPF0496 family.

The protein localises to the membrane. The protein is UPF0496 protein At3g57100 of Arabidopsis thaliana (Mouse-ear cress).